Here is a 784-residue protein sequence, read N- to C-terminus: Ribosome biogenesis protein BOP1 homolog (784 aa).

Basic residues predominate over residues 1–11 (MTKKLALKRRG). The disordered stretch occupies residues 1-159 (MTKKLALKRR…DSDTSDEEDI (159 aa)). Composition is skewed to acidic residues over residues 27 to 36 (SENEEEEEDL), 45 to 54 (EDSTDDEGID), 62 to 73 (SEELQFESDEEG), and 84 to 111 (AEED…EDEE). Composition is skewed to basic and acidic residues over residues 112–123 (KDSKSKQTDDKP) and 138–148 (LPKRDSSKPEY). The span at 149–158 (QDSDTSDEED) shows a compositional bias: acidic residues. WD repeat units follow at residues 445–486 (GHTD…RTIE), 488–526 (DEVV…KVLV), 570–612 (THFK…SQIP), 615–653 (KSKG…LVKK), 656–695 (TNSK…KPYQ), 699–738 (LHRN…DLLQ), and 754–784 (RDEF…RLYT).

The protein belongs to the WD repeat BOP1/ERB1 family.

Its subcellular location is the nucleus. It is found in the nucleolus. It localises to the nucleoplasm. Functionally, required for maturation of ribosomal RNAs and formation of the large ribosomal subunit. The protein is Ribosome biogenesis protein BOP1 homolog of Drosophila melanogaster (Fruit fly).